The following is a 249-amino-acid chain: ATP synthase subunit a (249 aa).

Helical transmembrane passes span 30 to 50 (SLYM…GSAG), 84 to 104 (FFPL…IGVI), 114 to 134 (LIVT…YGLY), 143 to 163 (VFVP…IEVI), 193 to 213 (FVTS…LPLA), and 220 to 240 (ILEV…TCIY).

The protein belongs to the ATPase A chain family. In terms of assembly, F-type ATPases have 2 components, CF(1) - the catalytic core - and CF(0) - the membrane proton channel. CF(1) has five subunits: alpha(3), beta(3), gamma(1), delta(1), epsilon(1). CF(0) has three main subunits: a(1), b(2) and c(9-12). The alpha and beta chains form an alternating ring which encloses part of the gamma chain. CF(1) is attached to CF(0) by a central stalk formed by the gamma and epsilon chains, while a peripheral stalk is formed by the delta and b chains.

It localises to the cell inner membrane. Its function is as follows. Key component of the proton channel; it plays a direct role in the translocation of protons across the membrane. The protein is ATP synthase subunit a of Afipia carboxidovorans (strain ATCC 49405 / DSM 1227 / KCTC 32145 / OM5) (Oligotropha carboxidovorans).